Consider the following 467-residue polypeptide: Probable receptor-like protein kinase At3g17420 (467 aa).

Residues 1–35 form the signal peptide; the sequence is MTSQLKRTLTKRYGVLELWEIIVIALFAAFIVILV. Residues 36–123 lie on the Extracellular side of the membrane; that stretch reads LSVWLSFRKK…LPPSTPSTTA (88 aa). Residue Asn-50 is glycosylated (N-linked (GlcNAc...) asparagine). Ser-70 carries the phosphoserine modification. A glycan (N-linked (GlcNAc...) asparagine) is linked at Asn-79. The interval 102-126 is disordered; the sequence is GSLEKKPLVGSHLPPSTPSTTAPSP. Residues 124-144 form a helical membrane-spanning segment; that stretch reads PSPLLGLPEVSHIGWGHWFTL. The Cytoplasmic portion of the chain corresponds to 145–467; sequence RDLQLATNHF…DNDITTDAKI (323 aa). Residues 154 to 433 enclose the Protein kinase domain; it reads FSKESIIGDG…MLESDEYPVM (280 aa). ATP is bound by residues 160 to 168 and Lys-182; that span reads IGDGGYGVV. Position 227 is a phosphotyrosine (Tyr-227). Asp-280 (proton acceptor) is an active-site residue. Phosphoserine occurs at positions 284 and 313. A phosphothreonine mark is found at Thr-314 and Thr-319. Tyr-327 carries the phosphotyrosine modification. Residues 413–467 are disordered; it reads DKRPKMSQVARMLESDEYPVMPREERRRRRNQNAETHRESTDTNKDNDITTDAKI. Over residues 447-467 the composition is skewed to basic and acidic residues; the sequence is ETHRESTDTNKDNDITTDAKI.

The protein belongs to the protein kinase superfamily. Ser/Thr protein kinase family.

The protein resides in the cell membrane. It catalyses the reaction L-seryl-[protein] + ATP = O-phospho-L-seryl-[protein] + ADP + H(+). It carries out the reaction L-threonyl-[protein] + ATP = O-phospho-L-threonyl-[protein] + ADP + H(+). The polypeptide is Probable receptor-like protein kinase At3g17420 (Arabidopsis thaliana (Mouse-ear cress)).